The primary structure comprises 165 residues: Pyruvoyl-dependent arginine decarboxylase 1 (165 aa).

S45 is modified (pyruvic acid (Ser)).

This sequence belongs to the PdaD family. The cofactor is pyruvate.

It catalyses the reaction L-arginine + H(+) = agmatine + CO2. This is Pyruvoyl-dependent arginine decarboxylase 1 (pdaD1) from Methanosarcina acetivorans (strain ATCC 35395 / DSM 2834 / JCM 12185 / C2A).